The primary structure comprises 199 residues: ATP synthase subunit a (199 aa).

The next 5 helical transmembrane spans lie at 2 to 22 (NQVY…LFYF), 53 to 73 (VISV…YFTY), 80 to 100 (MVEF…LTFI), 141 to 161 (LTVN…GLEL), and 169 to 189 (WLSI…SYIF).

It belongs to the ATPase A chain family. F-type ATPases have 2 components, CF(1) - the catalytic core - and CF(0) - the membrane proton channel. CF(1) has five subunits: alpha(3), beta(3), gamma(1), delta(1), epsilon(1). CF(0) has three main subunits: a, b and c.

Its subcellular location is the mitochondrion inner membrane. In terms of biological role, mitochondrial membrane ATP synthase (F(1)F(0) ATP synthase or Complex V) produces ATP from ADP in the presence of a proton gradient across the membrane which is generated by electron transport complexes of the respiratory chain. F-type ATPases consist of two structural domains, F(1) - containing the extramembraneous catalytic core and F(0) - containing the membrane proton channel, linked together by a central stalk and a peripheral stalk. During catalysis, ATP synthesis in the catalytic domain of F(1) is coupled via a rotary mechanism of the central stalk subunits to proton translocation. Key component of the proton channel; it may play a direct role in the translocation of protons across the membrane. This Caenorhabditis briggsae protein is ATP synthase subunit a (atp6).